A 411-amino-acid chain; its full sequence is ATP phosphoribosyltransferase 1, chloroplastic (411 aa).

The segment covering 1–12 (MSLLLPTNLQQY) has biased composition (polar residues). The tract at residues 1 to 27 (MSLLLPTNLQQYPSSSSFPSSTPILSP) is disordered. The N-terminal 49 residues, 1–49 (MSLLLPTNLQQYPSSSSFPSSTPILSPPPSTAFSVIVPRRRCLRLVTSC), are a transit peptide targeting the chloroplast. Over residues 13–24 (PSSSSFPSSTPI) the composition is skewed to low complexity. Val50 bears the N-acetylvaline mark.

Belongs to the ATP phosphoribosyltransferase family. Long subfamily. It depends on Mg(2+) as a cofactor. Expressed in leaves and at lower levels in roots (at protein level).

It is found in the plastid. It localises to the chloroplast. It carries out the reaction 1-(5-phospho-beta-D-ribosyl)-ATP + diphosphate = 5-phospho-alpha-D-ribose 1-diphosphate + ATP. It participates in amino-acid biosynthesis; L-histidine biosynthesis; L-histidine from 5-phospho-alpha-D-ribose 1-diphosphate: step 1/9. Feedback inhibited by L-histidine. Functionally, catalyzes the condensation of ATP and 5-phosphoribose 1-diphosphate to form N'-(5'-phosphoribosyl)-ATP (PR-ATP). The protein is ATP phosphoribosyltransferase 1, chloroplastic (HISN1A) of Arabidopsis thaliana (Mouse-ear cress).